The chain runs to 206 residues: Bis(5'-adenosyl)-triphosphatase (206 aa).

The HIT domain maps to 3-115 (KPIYFSKFLV…KINNVGDLIY (113 aa)). Positions 96 to 100 (HLHTH) match the Histidine triad motif motif. Histidine 98 (tele-AMP-histidine intermediate) is an active-site residue. The interval 143-164 (RQARKNNSTSATVDGDELSQGP) is disordered.

As to quaternary structure, homodimer. Requires Mn(2+) as cofactor.

It localises to the cytoplasm. It is found in the nucleus. Its subcellular location is the mitochondrion. It carries out the reaction P(1),P(3)-bis(5'-adenosyl) triphosphate + H2O = AMP + ADP + 2 H(+). In terms of biological role, cleaves A-5'-PPP-5'A to yield AMP and ADP. Can cleave all dinucleoside polyphosphates, provided the phosphate chain contains at least 3 phosphates and that 1 of the 2 bases composing the nucleotide is a purine. Is most effective on dinucleoside triphosphates. Negatively regulates intracellular dinucleoside polyphosphate levels, which elevate following heat shock. The polypeptide is Bis(5'-adenosyl)-triphosphatase (HNT2) (Saccharomyces cerevisiae (strain RM11-1a) (Baker's yeast)).